Here is a 183-residue protein sequence, read N- to C-terminus: Deoxyuridine 5'-triphosphate nucleotidohydrolase (183 aa).

Substrate contacts are provided by residues 67-69 (RSG), asparagine 80, 84-86 (TID), and lysine 94. The segment at 138 to 183 (RAEGGFGSTGGHAGLDPASGTSGQVAEGGPTGGNRYASVVSDREGQ) is disordered. Gly residues predominate over residues 141–150 (GGFGSTGGHA).

This sequence belongs to the dUTPase family. Requires Mg(2+) as cofactor.

The enzyme catalyses dUTP + H2O = dUMP + diphosphate + H(+). Its pathway is pyrimidine metabolism; dUMP biosynthesis; dUMP from dCTP (dUTP route): step 2/2. Its function is as follows. This enzyme is involved in nucleotide metabolism: it produces dUMP, the immediate precursor of thymidine nucleotides and it decreases the intracellular concentration of dUTP so that uracil cannot be incorporated into DNA. This chain is Deoxyuridine 5'-triphosphate nucleotidohydrolase, found in Streptomyces coelicolor (strain ATCC BAA-471 / A3(2) / M145).